The following is a 143-amino-acid chain: 3-hydroxyacyl-[acyl-carrier-protein] dehydratase FabZ (143 aa).

His-49 is a catalytic residue.

The protein belongs to the thioester dehydratase family. FabZ subfamily.

The protein resides in the cytoplasm. It carries out the reaction a (3R)-hydroxyacyl-[ACP] = a (2E)-enoyl-[ACP] + H2O. Functionally, involved in unsaturated fatty acids biosynthesis. Catalyzes the dehydration of short chain beta-hydroxyacyl-ACPs and long chain saturated and unsaturated beta-hydroxyacyl-ACPs. This Wolbachia pipientis subsp. Culex pipiens (strain wPip) protein is 3-hydroxyacyl-[acyl-carrier-protein] dehydratase FabZ.